The chain runs to 441 residues: 2-oxoisovalerate dehydrogenase subunit alpha, mitochondrial (441 aa).

A mitochondrion-targeting transit peptide spans 1 to 17 (MISQSYRILSRISRNNE). A thiamine diphosphate-binding site is contributed by 145–147 (QYR). Residues Ser194, Thr199, and Gln200 each coordinate K(+).

The protein belongs to the BCKDHA family. Heterotetramer of alpha and beta chains. It depends on thiamine diphosphate as a cofactor.

It is found in the mitochondrion matrix. The enzyme catalyses N(6)-[(R)-lipoyl]-L-lysyl-[protein] + 3-methyl-2-oxobutanoate + H(+) = N(6)-[(R)-S(8)-2-methylpropanoyldihydrolipoyl]-L-lysyl-[protein] + CO2. Its function is as follows. The branched-chain alpha-keto dehydrogenase complex catalyzes the overall conversion of alpha-keto acids to acyl-CoA and CO(2). It contains multiple copies of three enzymatic components: branched-chain alpha-keto acid decarboxylase (E1), lipoamide acyltransferase (E2) and lipoamide dehydrogenase (E3). The chain is 2-oxoisovalerate dehydrogenase subunit alpha, mitochondrial (bkdA) from Dictyostelium discoideum (Social amoeba).